The primary structure comprises 332 residues: MKLLKLTLISTALFSTAALAQAQQSVNVYSYDSFTSEWGAGPKVKQDFEKAHPQCAINFTPFESVGVLLNRVRLEGKKTKADIVLGLDNFFLEQAEKTGIFAPNNVDLTQLDLPTKWANKTFLPFDFGNYAFVYDKTKLQNPPKSLKELVERQDLSVIYQDPRTSSVGRGLLVWMNAVYPADKIQSAWKELDKHTVTVGKGWSDTYGAFLKGEADLVLSYSTSPLYHQLFEKKDNYAATDFAEGHITQVELAARVANHPNQCADDFMAFLISPTAQKHIVTANIMLPVIQGEIEPHFDALKVQQKTQTSINPMVNTEQLKNWISTWQTTLTK.

The first 20 residues, M1–A20, serve as a signal peptide directing secretion. Thiamine is bound by residues W202 and Y220–S223.

Belongs to the bacterial solute-binding protein 1 family. As to quaternary structure, the complex is composed of two ATP-binding proteins (ThiQ), two transmembrane proteins (ThiP) and a solute-binding protein (ThiB).

It is found in the periplasm. Its function is as follows. Part of the ABC transporter complex ThiBPQ involved in thiamine import. This Haemophilus influenzae (strain ATCC 51907 / DSM 11121 / KW20 / Rd) protein is Thiamine-binding periplasmic protein (thiB).